The following is a 512-amino-acid chain: Histidine ammonia-lyase (512 aa).

The segment at residues 143–145 (CSG) is a cross-link (5-imidazolinone (Cys-Gly)). 2,3-didehydroalanine (Ser) is present on S144.

The protein belongs to the PAL/histidase family. Contains an active site 4-methylidene-imidazol-5-one (MIO), which is formed autocatalytically by cyclization and dehydration of residues Cys-Ser-Gly.

It is found in the cytoplasm. It catalyses the reaction L-histidine = trans-urocanate + NH4(+). It participates in amino-acid degradation; L-histidine degradation into L-glutamate; N-formimidoyl-L-glutamate from L-histidine: step 1/3. The protein is Histidine ammonia-lyase of Streptomyces coelicolor (strain ATCC BAA-471 / A3(2) / M145).